The sequence spans 508 residues: MEEFKRYLELDRSQQHDFVYPLIFQEYIYALAHDHGLNRSILLENIGYDNKSSLLIVKRLITHLITQMHQQNHFLFSANDSNQNPFFGHNTNLYSQMILEGFAVVVEIPFSLRLRFSLEGKEIVKSQNLRSIHSIFPFLEDKFSHLNYVLDILIPHSIHLEILVQTLRYWVKDASSLYLLRFFLHEYRNWNSLITPKKSSFSFSKRNQRLFLFLYNFHICEYESIFVFLRNQSSHLRSISSGTFLERRYFYGKIEHFLEVFTKDFQAVLWLFKDPFIHYVRYQGKSILASKGTSLLMNKWKYYLVNFWQCYFYMWSQPGRIHTNQLSKHSLDFLGYLSSVRLNPSMVRSQMLENSFLIGNTIKKFDTLVPIIPMIGSLSKAKFCNVLGHPISKPVWTDLSDSDILDQFGRIYRNLSHYHSGSSKKTSLYQIKYILRLSCARTLARKHKSTVRAFLKRLGSELLEEFFTGEEQVFSLTFPKASSTSRGLYRRRIWYLDIICINDLANHE.

This sequence belongs to the intron maturase 2 family. MatK subfamily.

Its subcellular location is the plastid. It is found in the chloroplast. Its function is as follows. Usually encoded in the trnK tRNA gene intron. Probably assists in splicing its own and other chloroplast group II introns. The polypeptide is Maturase K (Gordonia lasianthus (Loblolly bay)).